The sequence spans 403 residues: Argininosuccinate synthase (403 aa).

ATP contacts are provided by residues A10 to S18 and A37. Y89 contacts L-citrulline. Residue G119 participates in ATP binding. Residues T121, N125, and D126 each coordinate L-aspartate. Residue N125 participates in L-citrulline binding. Residues R129, S178, S187, E263, and Y275 each contribute to the L-citrulline site.

Belongs to the argininosuccinate synthase family. Type 1 subfamily. In terms of assembly, homotetramer.

It localises to the cytoplasm. It catalyses the reaction L-citrulline + L-aspartate + ATP = 2-(N(omega)-L-arginino)succinate + AMP + diphosphate + H(+). It functions in the pathway amino-acid biosynthesis; L-arginine biosynthesis; L-arginine from L-ornithine and carbamoyl phosphate: step 2/3. This chain is Argininosuccinate synthase, found in Idiomarina loihiensis (strain ATCC BAA-735 / DSM 15497 / L2-TR).